An 82-amino-acid polypeptide reads, in one-letter code: Photosystem I iron-sulfur center (82 aa).

4Fe-4S ferredoxin-type domains lie at 2–31 and 40–69; these read AHSV…MVPW and IAAA…IRVY. Residues Cys11, Cys14, Cys17, Cys21, Cys49, Cys52, Cys55, and Cys59 each contribute to the [4Fe-4S] cluster site.

The cyanobacterial PSI reaction center is composed of one copy each of PsaA,B,C,D,E,F,I,J,K,L,M and X, and forms trimeric complexes. It depends on [4Fe-4S] cluster as a cofactor.

It is found in the cellular thylakoid membrane. The catalysed reaction is reduced [plastocyanin] + hnu + oxidized [2Fe-2S]-[ferredoxin] = oxidized [plastocyanin] + reduced [2Fe-2S]-[ferredoxin]. Its function is as follows. Apoprotein for the two 4Fe-4S centers FA and FB of photosystem I (PSI); essential for photochemical activity. FB is the terminal electron acceptor of PSI, donating electrons to ferredoxin. The C-terminus interacts with PsaA/B/D and helps assemble the protein into the PSI complex. Required for binding of PsaD and PsaE to PSI. PSI is a plastocyanin/cytochrome c6-ferredoxin oxidoreductase, converting photonic excitation into a charge separation, which transfers an electron from the donor P700 chlorophyll pair to the spectroscopically characterized acceptors A0, A1, FX, FA and FB in turn. This Synechococcus sp. (strain JA-2-3B'a(2-13)) (Cyanobacteria bacterium Yellowstone B-Prime) protein is Photosystem I iron-sulfur center.